The following is a 510-amino-acid chain: MIWHVQNENFILDSTRIFMKAFHLLLFNGSFIFPECILIFGLILLLMIDLTSDQKDRPWFYFISSTSLVISITALLFRWREEPIISFSGNFQTNNFNEIFQFLILLCSTLCIPLSVEYIECTEMAITEFLLFVLTATLGGMFLCGANDLITIFVAPECFSLCSYLLSGYTKRDLRSNEATMKYLLMGGASSSILVHGFSWLYGSSGGEIELQEIVNGLINTQMYNSPGISIALIFITVGLGFKLSPAPFHQWTPDVYEGSPTPVVAFLSVTSKVAASALATRILDIPFYFSSNEWHLLLEILAILSMILGNLLAITQTSMKRMLAYSSIGQIGYVIIGIIVGDSNDGYASMITYMLFYISMNLGTFACIVLFGLRTGTDNIRDYAGLYTKDPFLALSLALCLLSLGGLPPLAGFFGKLYLFWCGWQAGLYFLVSIGLLTSVLSIYYYLKIIKLLMTGRNQEITPYVRNYRRSPLRSNNSIELSMTVCVIASTIPGISMNPILAIAQDTLF.

The next 12 membrane-spanning stretches (helical) occupy residues 31-51 (FIFPECILIFGLILLLMIDLT), 59-79 (WFYFISSTSLVISITALLFRW), 99-119 (IFQFLILLCSTLCIPLSVEYI), 124-144 (MAITEFLLFVLTATLGGMFLC), 149-169 (LITIFVAPECFSLCSYLLSGY), 183-203 (YLLMGGASSSILVHGFSWLYG), 229-249 (ISIALIFITVGLGFKLSPAPF), 295-315 (WHLLLEILAILSMILGNLLAI), 323-343 (MLAYSSIGQIGYVIIGIIVGD), 354-374 (YMLFYISMNLGTFACIVLFGL), 395-415 (ALSLALCLLSLGGLPPLAGFF), and 418-438 (LYLFWCGWQAGLYFLVSIGLL).

It belongs to the complex I subunit 2 family. NDH is composed of at least 16 different subunits, 5 of which are encoded in the nucleus.

Its subcellular location is the plastid. It is found in the chloroplast thylakoid membrane. It carries out the reaction a plastoquinone + NADH + (n+1) H(+)(in) = a plastoquinol + NAD(+) + n H(+)(out). It catalyses the reaction a plastoquinone + NADPH + (n+1) H(+)(in) = a plastoquinol + NADP(+) + n H(+)(out). Its function is as follows. NDH shuttles electrons from NAD(P)H:plastoquinone, via FMN and iron-sulfur (Fe-S) centers, to quinones in the photosynthetic chain and possibly in a chloroplast respiratory chain. The immediate electron acceptor for the enzyme in this species is believed to be plastoquinone. Couples the redox reaction to proton translocation, and thus conserves the redox energy in a proton gradient. This chain is NAD(P)H-quinone oxidoreductase subunit 2 A, chloroplastic, found in Saccharum officinarum (Sugarcane).